The chain runs to 125 residues: Large ribosomal subunit protein bL12 (125 aa).

This sequence belongs to the bacterial ribosomal protein bL12 family. Homodimer. Part of the ribosomal stalk of the 50S ribosomal subunit. Forms a multimeric L10(L12)X complex, where L10 forms an elongated spine to which 2 to 4 L12 dimers bind in a sequential fashion. Binds GTP-bound translation factors.

Functionally, forms part of the ribosomal stalk which helps the ribosome interact with GTP-bound translation factors. Is thus essential for accurate translation. The protein is Large ribosomal subunit protein bL12 of Mesorhizobium japonicum (strain LMG 29417 / CECT 9101 / MAFF 303099) (Mesorhizobium loti (strain MAFF 303099)).